Reading from the N-terminus, the 682-residue chain is Glutamine--fructose-6-phosphate aminotransferase [isomerizing] 2 (682 aa).

Residue Cys2 is the For GATase activity of the active site. Residues 2 to 288 enclose the Glutamine amidotransferase type-2 domain; that stretch reads CGIFAYMNYR…DDDIAAVADG (287 aa). Ser244 bears the Phosphoserine mark. SIS domains follow at residues 360–499 and 531–672; these read HLKE…DRIS and LALE…VDFP. Residues 377–378, 422–424, Thr427, and His578 contribute to the substrate site; these read TS and SQS.

It catalyses the reaction D-fructose 6-phosphate + L-glutamine = D-glucosamine 6-phosphate + L-glutamate. Its pathway is nucleotide-sugar biosynthesis; UDP-N-acetyl-alpha-D-glucosamine biosynthesis; alpha-D-glucosamine 6-phosphate from D-fructose 6-phosphate: step 1/1. Functionally, controls the flux of glucose into the hexosamine pathway. Most likely involved in regulating the availability of precursors for N- and O-linked glycosylation of proteins. The sequence is that of Glutamine--fructose-6-phosphate aminotransferase [isomerizing] 2 (GFPT2) from Bos taurus (Bovine).